A 353-amino-acid chain; its full sequence is Photosystem II protein D1 (353 aa).

Thr-2 bears the N-acetylthreonine mark. Phosphothreonine is present on Thr-2. 3 helical membrane passes run 29-46 (YIGWFGVIMIPCLLTATS), 118-133 (HFLLGVACYMGREWEL), and 142-156 (WIAVAYSAPVAAATA). His-118 lines the chlorophyll a pocket. Tyr-126 provides a ligand contact to pheophytin a. [CaMn4O5] cluster is bound by residues Asp-170 and Glu-189. Residues 197 to 218 (FHMLGVAGVFGGSLFSAMHGSL) traverse the membrane as a helical segment. His-198 lines the chlorophyll a pocket. A quinone is bound by residues His-215 and 264–265 (SF). Fe cation is bound at residue His-215. His-272 lines the Fe cation pocket. The helical transmembrane segment at 274-288 (FLAAWPVVGIWFTAL) threads the bilayer. [CaMn4O5] cluster-binding residues include His-332, Glu-333, Asp-342, and Ala-344. Positions 345–353 (SVEAPSVNA) are excised as a propeptide.

Belongs to the reaction center PufL/M/PsbA/D family. As to quaternary structure, PSII is composed of 1 copy each of membrane proteins PsbA, PsbB, PsbC, PsbD, PsbE, PsbF, PsbH, PsbI, PsbJ, PsbK, PsbL, PsbM, PsbT, PsbX, PsbY, PsbZ, Psb30/Ycf12, at least 3 peripheral proteins of the oxygen-evolving complex and a large number of cofactors. It forms dimeric complexes. The D1/D2 heterodimer binds P680, chlorophylls that are the primary electron donor of PSII, and subsequent electron acceptors. It shares a non-heme iron and each subunit binds pheophytin, quinone, additional chlorophylls, carotenoids and lipids. D1 provides most of the ligands for the Mn4-Ca-O5 cluster of the oxygen-evolving complex (OEC). There is also a Cl(-1) ion associated with D1 and D2, which is required for oxygen evolution. The PSII complex binds additional chlorophylls, carotenoids and specific lipids. serves as cofactor. Post-translationally, tyr-161 forms a radical intermediate that is referred to as redox-active TyrZ, YZ or Y-Z. C-terminally processed by CTPA; processing is essential to allow assembly of the oxygen-evolving complex and thus photosynthetic growth.

It is found in the plastid. It localises to the chloroplast thylakoid membrane. It catalyses the reaction 2 a plastoquinone + 4 hnu + 2 H2O = 2 a plastoquinol + O2. Functionally, photosystem II (PSII) is a light-driven water:plastoquinone oxidoreductase that uses light energy to abstract electrons from H(2)O, generating O(2) and a proton gradient subsequently used for ATP formation. It consists of a core antenna complex that captures photons, and an electron transfer chain that converts photonic excitation into a charge separation. The D1/D2 (PsbA/PsbD) reaction center heterodimer binds P680, the primary electron donor of PSII as well as several subsequent electron acceptors. The protein is Photosystem II protein D1 of Oltmannsiellopsis viridis (Marine flagellate).